The sequence spans 382 residues: Dual-specificity RNA methyltransferase RlmN (382 aa).

Glu-94 acts as the Proton acceptor in catalysis. In terms of domain architecture, Radical SAM core spans 100 to 336 (EANRGTLCVS…NTITRKTRGD (237 aa)). A disulfide bridge connects residues Cys-107 and Cys-342. [4Fe-4S] cluster-binding residues include Cys-114, Cys-118, and Cys-121. S-adenosyl-L-methionine-binding positions include 168–169 (GE), Ser-200, 222–224 (SLH), and Asn-299. Cys-342 (S-methylcysteine intermediate) is an active-site residue.

The protein belongs to the radical SAM superfamily. RlmN family. [4Fe-4S] cluster is required as a cofactor.

The protein resides in the cytoplasm. It carries out the reaction adenosine(2503) in 23S rRNA + 2 reduced [2Fe-2S]-[ferredoxin] + 2 S-adenosyl-L-methionine = 2-methyladenosine(2503) in 23S rRNA + 5'-deoxyadenosine + L-methionine + 2 oxidized [2Fe-2S]-[ferredoxin] + S-adenosyl-L-homocysteine. The enzyme catalyses adenosine(37) in tRNA + 2 reduced [2Fe-2S]-[ferredoxin] + 2 S-adenosyl-L-methionine = 2-methyladenosine(37) in tRNA + 5'-deoxyadenosine + L-methionine + 2 oxidized [2Fe-2S]-[ferredoxin] + S-adenosyl-L-homocysteine. In terms of biological role, specifically methylates position 2 of adenine 2503 in 23S rRNA and position 2 of adenine 37 in tRNAs. m2A2503 modification seems to play a crucial role in the proofreading step occurring at the peptidyl transferase center and thus would serve to optimize ribosomal fidelity. This chain is Dual-specificity RNA methyltransferase RlmN, found in Legionella pneumophila subsp. pneumophila (strain Philadelphia 1 / ATCC 33152 / DSM 7513).